The following is a 336-amino-acid chain: UDP-3-O-acylglucosamine N-acyltransferase (336 aa).

His-237 functions as the Proton acceptor in the catalytic mechanism.

It belongs to the transferase hexapeptide repeat family. LpxD subfamily. As to quaternary structure, homotrimer.

The enzyme catalyses a UDP-3-O-[(3R)-3-hydroxyacyl]-alpha-D-glucosamine + a (3R)-hydroxyacyl-[ACP] = a UDP-2-N,3-O-bis[(3R)-3-hydroxyacyl]-alpha-D-glucosamine + holo-[ACP] + H(+). It participates in bacterial outer membrane biogenesis; LPS lipid A biosynthesis. Catalyzes the N-acylation of UDP-3-O-acylglucosamine using 3-hydroxyacyl-ACP as the acyl donor. Is involved in the biosynthesis of lipid A, a phosphorylated glycolipid that anchors the lipopolysaccharide to the outer membrane of the cell. The chain is UDP-3-O-acylglucosamine N-acyltransferase from Alcanivorax borkumensis (strain ATCC 700651 / DSM 11573 / NCIMB 13689 / SK2).